A 129-amino-acid chain; its full sequence is Putative reactive intermediate deaminase TdcF (129 aa).

Lysine 58 carries the N6-(pyridoxal phosphate)lysine modification. Substrate contacts are provided by residues 105–107 and glutamate 120; that span reads RSC.

This sequence belongs to the RutC family. In terms of assembly, homotrimer.

It functions in the pathway amino-acid degradation; L-threonine degradation via propanoate pathway. May be a post-translational regulator that controls the metabolic fate of L-threonine or the potentially toxic intermediate 2-ketobutyrate. This is Putative reactive intermediate deaminase TdcF (tdcF) from Escherichia coli O6:H1 (strain CFT073 / ATCC 700928 / UPEC).